Reading from the N-terminus, the 215-residue chain is MSKVYDWFEERLEIQAIADDITSKYVPPHVNIFYCLGGITLTCFLVQVATGFAMTFYYRPTVTEAFSSVQYIMTEANFGWLIRSVHRWSASMMVLMMILHVFRVYLTGGFKKPRELTWVTGVVLAVLTASFGVTGYSLPWDQIGYWAVKIVTGVPEAIPIIGSPLVELLRGSASVGQSTLTRFYSLHTFVLPLLTAVFMLMHFPMIRKQGISGPL.

The helical transmembrane segment at 32–52 (IFYCLGGITLTCFLVQVATGF) threads the bilayer. Cys35 lines the heme c pocket. Residues His86 and His100 each coordinate heme b. The next 3 helical transmembrane spans lie at 90 to 110 (ASMM…TGGF), 116 to 136 (LTWV…VTGY), and 186 to 206 (LHTF…FPMI). Residues His187 and His202 each coordinate heme b.

It belongs to the cytochrome b family. PetB subfamily. The 4 large subunits of the cytochrome b6-f complex are cytochrome b6, subunit IV (17 kDa polypeptide, PetD), cytochrome f and the Rieske protein, while the 4 small subunits are PetG, PetL, PetM and PetN. The complex functions as a dimer. Heme b serves as cofactor. Heme c is required as a cofactor.

Its subcellular location is the plastid. The protein resides in the chloroplast thylakoid membrane. In terms of biological role, component of the cytochrome b6-f complex, which mediates electron transfer between photosystem II (PSII) and photosystem I (PSI), cyclic electron flow around PSI, and state transitions. The polypeptide is Cytochrome b6 (Phalaenopsis aphrodite subsp. formosana (Moth orchid)).